We begin with the raw amino-acid sequence, 459 residues long: Serine/threonine-protein kinase 12 (459 aa).

The tract at residues 1-30 is disordered; the sequence is MEEDYQQPRFTIGRQSSMAPEKIPEPSVHS. 3 ANK repeats span residues 42 to 71, 75 to 104, and 108 to 137; these read DGGV…DANY, DDRT…EVDP, and WGST…KHPM. The region spanning 102–417 is the Protein kinase domain; sequence VDPKDRWGST…EIIKRLESIL (316 aa). ATP contacts are provided by residues 108 to 116 and Lys-184; that span reads WGSTPFADA. Asp-281 acts as the Proton acceptor in catalysis.

Belongs to the protein kinase superfamily. Ser/Thr protein kinase family. As to quaternary structure, interacts with BLUS1, PHOT1 and PHOT2. In terms of tissue distribution, accumulates in leaves, stems, petioles and roots, especially in guard cells.

Its subcellular location is the cytoplasm. The protein resides in the cytosol. The enzyme catalyses L-seryl-[protein] + ATP = O-phospho-L-seryl-[protein] + ADP + H(+). The catalysed reaction is L-threonyl-[protein] + ATP = O-phospho-L-threonyl-[protein] + ADP + H(+). Serine/threonine protein kinase that phosphorylates proteins on serine and threonine residues. Mediates blue light-dependent stomatal opening in guard cells by promoting plasma membrane-type ATPases (AHA1 and AHA2) phosphorylation. The sequence is that of Serine/threonine-protein kinase 12 from Arabidopsis thaliana (Mouse-ear cress).